The primary structure comprises 331 residues: Biotin synthase (331 aa).

Positions 52-277 (PDVEVEGIIS…RTMLRFAGGR (226 aa)) constitute a Radical SAM core domain. Residues Cys-67, Cys-71, and Cys-74 each coordinate [4Fe-4S] cluster. Residues Cys-110, Cys-143, Cys-202, and Arg-272 each coordinate [2Fe-2S] cluster.

The protein belongs to the radical SAM superfamily. Biotin synthase family. Homodimer. The cofactor is [4Fe-4S] cluster. Requires [2Fe-2S] cluster as cofactor.

The enzyme catalyses (4R,5S)-dethiobiotin + (sulfur carrier)-SH + 2 reduced [2Fe-2S]-[ferredoxin] + 2 S-adenosyl-L-methionine = (sulfur carrier)-H + biotin + 2 5'-deoxyadenosine + 2 L-methionine + 2 oxidized [2Fe-2S]-[ferredoxin]. It functions in the pathway cofactor biosynthesis; biotin biosynthesis; biotin from 7,8-diaminononanoate: step 2/2. Functionally, catalyzes the conversion of dethiobiotin (DTB) to biotin by the insertion of a sulfur atom into dethiobiotin via a radical-based mechanism. This chain is Biotin synthase, found in Mycolicibacterium gilvum (strain PYR-GCK) (Mycobacterium gilvum (strain PYR-GCK)).